A 613-amino-acid polypeptide reads, in one-letter code: Chaperone protein DnaK (613 aa).

Positions M578–K613 are disordered. A compositionally biased stretch (low complexity) spans Q580–G602.

This sequence belongs to the heat shock protein 70 family.

Functionally, acts as a chaperone. This Picrophilus torridus (strain ATCC 700027 / DSM 9790 / JCM 10055 / NBRC 100828 / KAW 2/3) protein is Chaperone protein DnaK.